We begin with the raw amino-acid sequence, 314 residues long: Formate-nitrite transporter (314 aa).

Residues 1–47 (MQKSTSKYVIDPISIKTNCSSEESYIRCVEYGKGKAHYRNLILLAKA) are Cytoplasmic-facing. The helical transmembrane segment at 48–68 (ILAGVFVGVCAHASGIAGGLF) threads the bilayer. Residues 69–77 (YYHKLREYV) are Extracellular-facing. The helical transmembrane segment at 78 to 98 (GISMSAFVYGFTFPIAFLCII) threads the bilayer. Topologically, residues 99–128 (CTGSDLFTGNTLAVTTALLQKKLGLLCYMR) are cytoplasmic. A helical transmembrane segment spans residues 129–149 (VMCISLVGNYIGAVAFAFFVS). The Extracellular portion of the chain corresponds to 150–185 (YGSGAFSINTDTSKNHIFQFLNDIAIKKVSHSFIEC). The helical transmembrane segment at 186 to 206 (ICLAIGCNIFVCLAVYFVLSI) threads the bilayer. At 207–211 (KDGSG) the chain is on the cytoplasmic side. The helical transmembrane segment at 212–232 (LVFSVFFAVYAFAIAGYEHII) threads the bilayer. Residues 233–260 (ANIYTLNLALMISNDISFTQVYFKNLLP) lie on the Extracellular side of the membrane. Residues 261 to 281 (TLIGNYIAGGLVLAFPLFFIY) form a helical membrane-spanning segment. The Cytoplasmic portion of the chain corresponds to 282-314 (RSCYYDYDKMNDELNTVVLKTLSLELQNESNHI).

Belongs to the FNT transporter (TC 1.A.16) family. As to quaternary structure, homopentamer.

The protein resides in the cell membrane. It localises to the vacuole membrane. The enzyme catalyses (S)-lactate(in) + H(+)(in) = (S)-lactate(out) + H(+)(out). It catalyses the reaction formate(in) + H(+)(in) = formate(out) + H(+)(out). The catalysed reaction is pyruvate(out) + H(+)(out) = pyruvate(in) + H(+)(in). It carries out the reaction acetate(out) + H(+)(out) = acetate(in) + H(+)(in). Its activity is regulated as follows. Inhibited by the Malaria Box compound MMV007839 and its derivatives BH296 and BH267.meta. In terms of biological role, monocarboxylate-proton symporter that mediates the efflux of the waste product lactate in the intraerythrocytic parasites; active in acidic-to-neutral pH range. Transports L-lactate. This chain is Formate-nitrite transporter, found in Plasmodium malariae.